The primary structure comprises 84 residues: Small ribosomal subunit protein bS20 (84 aa).

Residues 1–22 (MPAPTKRERQNRKRFERNRSVR) are disordered. Residues 9-22 (RQNRKRFERNRSVR) are compositionally biased toward basic residues.

This sequence belongs to the bacterial ribosomal protein bS20 family.

In terms of biological role, binds directly to 16S ribosomal RNA. This chain is Small ribosomal subunit protein bS20, found in Rubrobacter xylanophilus (strain DSM 9941 / JCM 11954 / NBRC 16129 / PRD-1).